The following is a 289-amino-acid chain: Probable endonuclease 4 (289 aa).

9 residues coordinate Zn(2+): histidine 76, histidine 116, glutamate 152, aspartate 186, histidine 189, histidine 220, aspartate 233, histidine 235, and glutamate 265.

Belongs to the AP endonuclease 2 family. Requires Zn(2+) as cofactor.

The catalysed reaction is Endonucleolytic cleavage to 5'-phosphooligonucleotide end-products.. Endonuclease IV plays a role in DNA repair. It cleaves phosphodiester bonds at apurinic or apyrimidinic (AP) sites, generating a 3'-hydroxyl group and a 5'-terminal sugar phosphate. The protein is Probable endonuclease 4 of Malacoplasma penetrans (strain HF-2) (Mycoplasma penetrans).